A 112-amino-acid polypeptide reads, in one-letter code: MKGTLLLLGLLVTGELSFQTTEACLPFFEGYASVLSGSRVWLYQELQAFNATAEEKVALEKIQDCFSEERIRNILLEPKIMEAMVASPECLSYYGLDNIRSILDYISKLLGE.

The signal sequence occupies residues 1–23; the sequence is MKGTLLLLGLLVTGELSFQTTEA. A glycan (N-linked (GlcNAc...) asparagine) is linked at N50.

Belongs to the secretoglobin family. Expressed in lacrimal gland, at higher level in males than females. Expressed in the submandibular gland.

It is found in the secreted. The protein is Secretoglobin family 2B member 20 (Scgb2b20) of Mus musculus (Mouse).